A 162-amino-acid chain; its full sequence is NADH-quinone oxidoreductase subunit I (162 aa).

2 consecutive 4Fe-4S ferredoxin-type domains span residues 54-83 (RRYE…IESE) and 93-122 (TRYD…ETQI). The [4Fe-4S] cluster site is built by C63, C66, C69, C73, C102, C105, C108, and C112.

The protein belongs to the complex I 23 kDa subunit family. As to quaternary structure, NDH-1 is composed of 14 different subunits. Subunits NuoA, H, J, K, L, M, N constitute the membrane sector of the complex. [4Fe-4S] cluster serves as cofactor.

The protein localises to the cell inner membrane. The catalysed reaction is a quinone + NADH + 5 H(+)(in) = a quinol + NAD(+) + 4 H(+)(out). NDH-1 shuttles electrons from NADH, via FMN and iron-sulfur (Fe-S) centers, to quinones in the respiratory chain. The immediate electron acceptor for the enzyme in this species is believed to be ubiquinone. Couples the redox reaction to proton translocation (for every two electrons transferred, four hydrogen ions are translocated across the cytoplasmic membrane), and thus conserves the redox energy in a proton gradient. This is NADH-quinone oxidoreductase subunit I from Burkholderia thailandensis (strain ATCC 700388 / DSM 13276 / CCUG 48851 / CIP 106301 / E264).